Reading from the N-terminus, the 130-residue chain is MSMQDPLADMLTRIRNAQMAEKSVVSMPSSKLKVAVAKVLKDEGYIAGYQISSETKPLLSIELKYFEGRSVIEEVKRVSRPGLRQYKSAEDLPKVRGGLGVSIVSTNKGVMTDRAARAAGVGGEVLCTVF.

It belongs to the universal ribosomal protein uS8 family. Part of the 30S ribosomal subunit. Contacts proteins S5 and S12.

In terms of biological role, one of the primary rRNA binding proteins, it binds directly to 16S rRNA central domain where it helps coordinate assembly of the platform of the 30S subunit. The protein is Small ribosomal subunit protein uS8 of Pseudomonas fluorescens (strain SBW25).